The chain runs to 365 residues: Holliday junction branch migration complex subunit RuvB (365 aa).

Residues 1–191 form a large ATPase domain (RuvB-L) region; it reads MSPELGGGYD…FGFTAHMDFY (191 aa). ATP contacts are provided by residues Leu-30, Arg-31, Gly-72, Lys-75, Thr-76, Ser-77, 138 to 140, Arg-181, Tyr-191, and Arg-228; that span reads EDF. Thr-76 contacts Mg(2+). The interval 192-262 is small ATPAse domain (RuvB-S); sequence EPAELKQILM…IAHAALAVYD (71 aa). The segment at 265–365 is head domain (RuvB-H); it reads QLGLDRLDRS…QASLFDPEDP (101 aa). Residues Arg-320 and Arg-325 each coordinate DNA.

This sequence belongs to the RuvB family. Homohexamer. Forms an RuvA(8)-RuvB(12)-Holliday junction (HJ) complex. HJ DNA is sandwiched between 2 RuvA tetramers; dsDNA enters through RuvA and exits via RuvB. An RuvB hexamer assembles on each DNA strand where it exits the tetramer. Each RuvB hexamer is contacted by two RuvA subunits (via domain III) on 2 adjacent RuvB subunits; this complex drives branch migration. In the full resolvosome a probable DNA-RuvA(4)-RuvB(12)-RuvC(2) complex forms which resolves the HJ.

The protein localises to the cytoplasm. The enzyme catalyses ATP + H2O = ADP + phosphate + H(+). The RuvA-RuvB-RuvC complex processes Holliday junction (HJ) DNA during genetic recombination and DNA repair, while the RuvA-RuvB complex plays an important role in the rescue of blocked DNA replication forks via replication fork reversal (RFR). RuvA specifically binds to HJ cruciform DNA, conferring on it an open structure. The RuvB hexamer acts as an ATP-dependent pump, pulling dsDNA into and through the RuvAB complex. RuvB forms 2 homohexamers on either side of HJ DNA bound by 1 or 2 RuvA tetramers; 4 subunits per hexamer contact DNA at a time. Coordinated motions by a converter formed by DNA-disengaged RuvB subunits stimulates ATP hydrolysis and nucleotide exchange. Immobilization of the converter enables RuvB to convert the ATP-contained energy into a lever motion, pulling 2 nucleotides of DNA out of the RuvA tetramer per ATP hydrolyzed, thus driving DNA branch migration. The RuvB motors rotate together with the DNA substrate, which together with the progressing nucleotide cycle form the mechanistic basis for DNA recombination by continuous HJ branch migration. Branch migration allows RuvC to scan DNA until it finds its consensus sequence, where it cleaves and resolves cruciform DNA. The protein is Holliday junction branch migration complex subunit RuvB of Rhodococcus opacus (strain B4).